The following is a 325-amino-acid chain: Beta-ketoacyl-[acyl-carrier-protein] synthase III (325 aa).

Catalysis depends on residues C112 and H250. The segment at 251–255 (QANSR) is ACP-binding. Residue N280 is part of the active site.

It belongs to the thiolase-like superfamily. FabH family. In terms of assembly, homodimer.

It localises to the cytoplasm. It catalyses the reaction malonyl-[ACP] + acetyl-CoA + H(+) = 3-oxobutanoyl-[ACP] + CO2 + CoA. It functions in the pathway lipid metabolism; fatty acid biosynthesis. Its function is as follows. Catalyzes the condensation reaction of fatty acid synthesis by the addition to an acyl acceptor of two carbons from malonyl-ACP. Catalyzes the first condensation reaction which initiates fatty acid synthesis and may therefore play a role in governing the total rate of fatty acid production. Possesses both acetoacetyl-ACP synthase and acetyl transacylase activities. Its substrate specificity determines the biosynthesis of branched-chain and/or straight-chain of fatty acids. In Lactococcus lactis subsp. lactis (strain IL1403) (Streptococcus lactis), this protein is Beta-ketoacyl-[acyl-carrier-protein] synthase III.